A 216-amino-acid chain; its full sequence is Acyl-homoserine-lactone synthase (216 aa).

It belongs to the autoinducer synthase family.

The catalysed reaction is a fatty acyl-[ACP] + S-adenosyl-L-methionine = an N-acyl-L-homoserine lactone + S-methyl-5'-thioadenosine + holo-[ACP] + H(+). In terms of biological role, required for the synthesis of an acyl-HSL autoinducer that binds to YukR and which is involved in the regulation of motility and morphology. This chain is Acyl-homoserine-lactone synthase (yukI), found in Yersinia ruckeri.